The chain runs to 171 residues: Iron-sulfur cluster assembly protein 1 (171 aa).

Residues 1–55 constitute a mitochondrion transit peptide; the sequence is MLRAGGRRLLAPGLRRVLGGGAAAPVAVGGAKAYHERVVDHYENPRNVGSFENDD.

This sequence belongs to the NifU family. In terms of assembly, component of the core Fe-S cluster (ISC) assembly machinery. Requires [2Fe-2S] cluster as cofactor.

It is found in the mitochondrion matrix. The protein operates within cofactor biosynthesis; iron-sulfur cluster biosynthesis. In terms of biological role, scaffold protein for the de novo synthesis of iron-sulfur (Fe-S) clusters within mitochondria, which is required for maturation of both mitochondrial and cytoplasmic [2Fe-2S] and [4Fe-4S] proteins. First, a [2Fe-2S] cluster is transiently assembled on the scaffold protein ISCU (ISU1, ISU2 or ISU3). In a second step, the cluster is released from ISCU, transferred to a glutaredoxin, followed by the formation of mitochondrial [2Fe-2S] proteins, the synthesis of [4Fe-4S] clusters and their target-specific insertion into the recipient apoproteins. Cluster assembly on ISCU depends on the function of the cysteine desulfurase complex NFS1-ISD11, which serves as the sulfur donor for cluster synthesis, the iron-binding protein frataxin as the putative iron donor, and the electron transfer chain comprised of ferredoxin reductase and ferredoxin, which receive their electrons from NADH. The protein is Iron-sulfur cluster assembly protein 1 of Oryza sativa subsp. japonica (Rice).